A 457-amino-acid polypeptide reads, in one-letter code: tRNA-2-methylthio-N(6)-dimethylallyladenosine synthase (457 aa).

Residues 3–120 (KKVYVKTFGC…LPQMIDARRE (118 aa)) form the MTTase N-terminal domain. 6 residues coordinate [4Fe-4S] cluster: Cys-12, Cys-49, Cys-83, Cys-157, Cys-161, and Cys-164. Positions 143–377 (RVEGPSAFVS…QATIEENVAR (235 aa)) constitute a Radical SAM core domain. The TRAM domain maps to 380–447 (QSMLGKVERI…PHSLRGELVL (68 aa)).

It belongs to the methylthiotransferase family. MiaB subfamily. In terms of assembly, monomer. It depends on [4Fe-4S] cluster as a cofactor.

The protein localises to the cytoplasm. The enzyme catalyses N(6)-dimethylallyladenosine(37) in tRNA + (sulfur carrier)-SH + AH2 + 2 S-adenosyl-L-methionine = 2-methylsulfanyl-N(6)-dimethylallyladenosine(37) in tRNA + (sulfur carrier)-H + 5'-deoxyadenosine + L-methionine + A + S-adenosyl-L-homocysteine + 2 H(+). Its function is as follows. Catalyzes the methylthiolation of N6-(dimethylallyl)adenosine (i(6)A), leading to the formation of 2-methylthio-N6-(dimethylallyl)adenosine (ms(2)i(6)A) at position 37 in tRNAs that read codons beginning with uridine. The chain is tRNA-2-methylthio-N(6)-dimethylallyladenosine synthase from Burkholderia pseudomallei (strain 1710b).